The chain runs to 291 residues: Probable S-adenosylmethionine-dependent methyltransferase CRG1 (291 aa).

Belongs to the methyltransferase superfamily.

It localises to the cytoplasm. Its function is as follows. Probable S-adenosylmethionine-dependent methyltransferase which mediates cantharidin resistance. This is Probable S-adenosylmethionine-dependent methyltransferase CRG1 (CRG1) from Saccharomyces cerevisiae (strain ATCC 204508 / S288c) (Baker's yeast).